Reading from the N-terminus, the 62-residue chain is Cytotoxin 6 (62 aa).

The first 2 residues, 1–2, serve as a signal peptide directing secretion; the sequence is YT. Cystine bridges form between Cys5-Cys23, Cys16-Cys40, Cys44-Cys55, and Cys56-Cys61.

Belongs to the three-finger toxin family. Short-chain subfamily. Type IA cytotoxin sub-subfamily. Monomer in solution; Homodimer and oligomer in the presence of negatively charged lipids forming a pore with a size ranging between 20 and 30 Angstroms. Expressed by the venom gland.

Its subcellular location is the secreted. The protein resides in the target cell membrane. Functionally, shows cytolytic activity on many different cells by forming pore in lipid membranes. In vivo, increases heart rate or kills the animal by cardiac arrest. In addition, it binds to heparin with high affinity, interacts with Kv channel-interacting protein 1 (KCNIP1) in a calcium-independent manner, and binds to integrin alpha-V/beta-3 (ITGAV/ITGB3) with moderate affinity. The chain is Cytotoxin 6 from Naja sputatrix (Malayan spitting cobra).